The chain runs to 267 residues: Lectin SfL-2 (267 aa).

Repeat copies occupy residues Gly1–Glu67, Ser68–Gly135, Asp136–Ala202, and Asn203–Asn267. The 4 X approximate tandem repeats stretch occupies residues Gly1–Asn267.

In terms of assembly, monomer.

Lectin specific for high mannose N-glycans, recognizes the branched moiety of these glycans. Does not recognize other types of N-glycans or monosaccharides. The polypeptide is Lectin SfL-2 (Solieria filiformis (Red alga)).